The following is a 338-amino-acid chain: Formimidoylglutamase (338 aa).

Residues H137, D166, H168, D170, C259, and D261 each contribute to the Mn(2+) site.

Belongs to the arginase family. It depends on Mn(2+) as a cofactor.

It catalyses the reaction N-formimidoyl-L-glutamate + H2O = formamide + L-glutamate. It participates in amino-acid degradation; L-histidine degradation into L-glutamate; L-glutamate from N-formimidoyl-L-glutamate (hydrolase route): step 1/1. Functionally, catalyzes the conversion of N-formimidoyl-L-glutamate to L-glutamate and formamide. The sequence is that of Formimidoylglutamase from Clostridium tetani (strain Massachusetts / E88).